The primary structure comprises 584 residues: ETHYLENE INSENSITIVE 3-like 1 protein (584 aa).

A coiled-coil region spans residues 41–74 (YTDDEMDVDELEKRMWRDKMRLKRLKEQQSKCKE). Positions 67 to 80 (EQQSKCKEGVDGSK) are enriched in basic and acidic residues. Disordered regions lie at residues 67–93 (EQQSKCKEGVDGSKQRQSQEQARRKKM) and 565–584 (EGMGKQQQQQQQQQDVSIWF).

The protein belongs to the EIN3 family. As to quaternary structure, acts as a homodimer to bind the primary ethylene response element.

It localises to the nucleus. In terms of biological role, probable transcription factor acting as a positive regulator in the ethylene response pathway. Could bind the primary ethylene response element present in the ETHYLENE-RESPONSE-FACTOR1 promoter. This chain is ETHYLENE INSENSITIVE 3-like 1 protein (EIL1), found in Arabidopsis thaliana (Mouse-ear cress).